The sequence spans 179 residues: Acireductone dioxygenase (179 aa).

Residues H88, H90, E94, and H133 each contribute to the Fe(2+) site. 4 residues coordinate Ni(2+): H88, H90, E94, and H133.

The protein belongs to the acireductone dioxygenase (ARD) family. In terms of assembly, monomer. Interacts with MMP14. Fe(2+) is required as a cofactor. Ni(2+) serves as cofactor.

It is found in the cytoplasm. Its subcellular location is the nucleus. The protein resides in the cell membrane. It carries out the reaction 1,2-dihydroxy-5-(methylsulfanyl)pent-1-en-3-one + O2 = 4-methylsulfanyl-2-oxobutanoate + formate + 2 H(+). The catalysed reaction is 1,2-dihydroxy-5-(methylsulfanyl)pent-1-en-3-one + O2 = 3-(methylsulfanyl)propanoate + CO + formate + 2 H(+). It functions in the pathway amino-acid biosynthesis; L-methionine biosynthesis via salvage pathway; L-methionine from S-methyl-5-thio-alpha-D-ribose 1-phosphate: step 5/6. Functionally, catalyzes 2 different reactions between oxygen and the acireductone 1,2-dihydroxy-3-keto-5-methylthiopentene (DHK-MTPene) depending upon the metal bound in the active site. Fe-containing acireductone dioxygenase (Fe-ARD) produces formate and 2-keto-4-methylthiobutyrate (KMTB), the alpha-ketoacid precursor of methionine in the methionine recycle pathway. Ni-containing acireductone dioxygenase (Ni-ARD) produces methylthiopropionate, carbon monoxide and formate, and does not lie on the methionine recycle pathway. The protein is Acireductone dioxygenase (adi1) of Xenopus laevis (African clawed frog).